Reading from the N-terminus, the 347-residue chain is Quinolinate synthase (347 aa).

Iminosuccinate contacts are provided by His47 and Ser68. Cys113 contacts [4Fe-4S] cluster. Iminosuccinate is bound by residues 139–141 (YAN) and Ser156. Residue Cys200 coordinates [4Fe-4S] cluster. Iminosuccinate is bound by residues 226–228 (HPE) and Thr243. Position 297 (Cys297) interacts with [4Fe-4S] cluster.

The protein belongs to the quinolinate synthase family. Type 1 subfamily. Requires [4Fe-4S] cluster as cofactor.

The protein localises to the cytoplasm. It catalyses the reaction iminosuccinate + dihydroxyacetone phosphate = quinolinate + phosphate + 2 H2O + H(+). It participates in cofactor biosynthesis; NAD(+) biosynthesis; quinolinate from iminoaspartate: step 1/1. Functionally, catalyzes the condensation of iminoaspartate with dihydroxyacetone phosphate to form quinolinate. This is Quinolinate synthase from Shigella dysenteriae serotype 1 (strain Sd197).